We begin with the raw amino-acid sequence, 399 residues long: Glutamyl-tRNA reductase (399 aa).

Substrate contacts are provided by residues 45–48 (TCNR), Ser-101, 106–108 (EDQ), and Gln-112. Cys-46 acts as the Nucleophile in catalysis. Residue 177 to 182 (GFGKIG) participates in NADP(+) binding.

This sequence belongs to the glutamyl-tRNA reductase family. As to quaternary structure, homodimer.

The enzyme catalyses (S)-4-amino-5-oxopentanoate + tRNA(Glu) + NADP(+) = L-glutamyl-tRNA(Glu) + NADPH + H(+). The protein operates within porphyrin-containing compound metabolism; protoporphyrin-IX biosynthesis; 5-aminolevulinate from L-glutamyl-tRNA(Glu): step 1/2. Its function is as follows. Catalyzes the NADPH-dependent reduction of glutamyl-tRNA(Glu) to glutamate 1-semialdehyde (GSA). This Clostridium kluyveri (strain ATCC 8527 / DSM 555 / NBRC 12016 / NCIMB 10680 / K1) protein is Glutamyl-tRNA reductase.